The sequence spans 236 residues: Phosphoribosylaminoimidazole-succinocarboxamide synthase (236 aa).

This sequence belongs to the SAICAR synthetase family.

It carries out the reaction 5-amino-1-(5-phospho-D-ribosyl)imidazole-4-carboxylate + L-aspartate + ATP = (2S)-2-[5-amino-1-(5-phospho-beta-D-ribosyl)imidazole-4-carboxamido]succinate + ADP + phosphate + 2 H(+). The protein operates within purine metabolism; IMP biosynthesis via de novo pathway; 5-amino-1-(5-phospho-D-ribosyl)imidazole-4-carboxamide from 5-amino-1-(5-phospho-D-ribosyl)imidazole-4-carboxylate: step 1/2. This is Phosphoribosylaminoimidazole-succinocarboxamide synthase from Coprothermobacter proteolyticus (strain ATCC 35245 / DSM 5265 / OCM 4 / BT).